A 381-amino-acid polypeptide reads, in one-letter code: Glycerol-3-phosphate dehydrogenase [NAD(+)] (381 aa).

The disordered stretch occupies residues 1-27 (MTAMDRLDHVSNQLAAKRQKKNPEGKP). Residues 34 to 39 (GSGNWG), Phe-66, and Phe-122 each bind NAD(+). Residue Lys-145 coordinates substrate. Ala-178 lines the NAD(+) pocket. Lys-238 acts as the Proton acceptor in catalysis. 2 residues coordinate NAD(+): Arg-303 and Gln-332. 303–304 (RN) provides a ligand contact to substrate.

Belongs to the NAD-dependent glycerol-3-phosphate dehydrogenase family.

The enzyme catalyses sn-glycerol 3-phosphate + NAD(+) = dihydroxyacetone phosphate + NADH + H(+). The chain is Glycerol-3-phosphate dehydrogenase [NAD(+)] (GPD) from Pichia angusta (Yeast).